A 214-amino-acid chain; its full sequence is Small ribosomal subunit protein uS3 (214 aa).

The region spanning 39–107 (IRAYLLKKPA…EVWVAVEEVK (69 aa)) is the KH type-2 domain.

The protein belongs to the universal ribosomal protein uS3 family. In terms of assembly, part of the 30S ribosomal subunit. Forms a tight complex with proteins S10 and S14.

Binds the lower part of the 30S subunit head. Binds mRNA in the 70S ribosome, positioning it for translation. This Protochlamydia amoebophila (strain UWE25) protein is Small ribosomal subunit protein uS3.